Here is a 224-residue protein sequence, read N- to C-terminus: Flagellar L-ring protein (224 aa).

An N-terminal signal peptide occupies residues Met1–Gly15. Cys16 carries the N-palmitoyl cysteine lipid modification. Residue Cys16 is the site of S-diacylglycerol cysteine attachment.

The protein belongs to the FlgH family. The basal body constitutes a major portion of the flagellar organelle and consists of four rings (L,P,S, and M) mounted on a central rod.

The protein resides in the cell outer membrane. The protein localises to the bacterial flagellum basal body. Assembles around the rod to form the L-ring and probably protects the motor/basal body from shearing forces during rotation. This is Flagellar L-ring protein from Shewanella amazonensis (strain ATCC BAA-1098 / SB2B).